The primary structure comprises 276 residues: Cerberus (276 aa).

The N-terminal stretch at 1–20 is a signal peptide; that stretch reads MLLCVLKIYIIFCLVNDGAG. N-linked (GlcNAc...) asparagine glycans are attached at residues Asn103, Asn118, and Asn160. 4 disulfides stabilise this stretch: Cys175-Cys221, Cys189-Cys235, Cys199-Cys251, and Cys203-Cys253. The CTCK domain occupies 175–259; that stretch reads CKTLPFTQNI…ECACEAHKNN (85 aa). Asn234 carries an N-linked (GlcNAc...) asparagine glycan.

This sequence belongs to the DAN family. The long chain interacts with nodal/nr-1, bmp4 and wnt8, thereby inhibiting their function. The short chain interacts with nodal/nr-1 but not bmp4 or wnt8. In terms of tissue distribution, expressed in the anterior endomesoderm of the early gastrula with expression expanded laterally around the margin at the endoderm/mesoderm boundary.

Its subcellular location is the secreted. Functionally, inhibits wnt, nodal/nr-1 and bmp signaling in the embryo to promote head formation and anterior neural induction. Within the endoderm, acts as an essential mediator of nodal/nr-1-induced cardiogenesis in the overlying mesoderm. The chain is Cerberus from Xenopus tropicalis (Western clawed frog).